Consider the following 364-residue polypeptide: tRNA-specific 2-thiouridylase MnmA 1 (364 aa).

ATP is bound by residues 10–17 (GMSGGVDS) and methionine 36. Cysteine 106 (nucleophile) is an active-site residue. Cysteines 106 and 204 form a disulfide. An ATP-binding site is contributed by glycine 130. The interaction with tRNA stretch occupies residues 154–156 (KDQ). Cysteine 204 functions as the Cysteine persulfide intermediate in the catalytic mechanism. An interaction with tRNA region spans residues 310-311 (RY).

The protein belongs to the MnmA/TRMU family.

The protein resides in the cytoplasm. The catalysed reaction is S-sulfanyl-L-cysteinyl-[protein] + uridine(34) in tRNA + AH2 + ATP = 2-thiouridine(34) in tRNA + L-cysteinyl-[protein] + A + AMP + diphosphate + H(+). Functionally, catalyzes the 2-thiolation of uridine at the wobble position (U34) of tRNA, leading to the formation of s(2)U34. This Caldanaerobacter subterraneus subsp. tengcongensis (strain DSM 15242 / JCM 11007 / NBRC 100824 / MB4) (Thermoanaerobacter tengcongensis) protein is tRNA-specific 2-thiouridylase MnmA 1.